A 366-amino-acid chain; its full sequence is Aminomethyltransferase (366 aa).

Belongs to the GcvT family. The glycine cleavage system is composed of four proteins: P, T, L and H.

It carries out the reaction N(6)-[(R)-S(8)-aminomethyldihydrolipoyl]-L-lysyl-[protein] + (6S)-5,6,7,8-tetrahydrofolate = N(6)-[(R)-dihydrolipoyl]-L-lysyl-[protein] + (6R)-5,10-methylene-5,6,7,8-tetrahydrofolate + NH4(+). The glycine cleavage system catalyzes the degradation of glycine. In Neisseria meningitidis serogroup A / serotype 4A (strain DSM 15465 / Z2491), this protein is Aminomethyltransferase.